The primary structure comprises 225 residues: Probable GTP-binding protein EngB (225 aa).

The 174-residue stretch at Val-31–Pro-204 folds into the EngB-type G domain. GTP-binding positions include Gly-39–Ser-46, Gly-65–Leu-69, Asp-83–Gly-86, Thr-150–Asp-153, and Phe-183–Ser-185. Mg(2+) contacts are provided by Ser-46 and Thr-67.

It belongs to the TRAFAC class TrmE-Era-EngA-EngB-Septin-like GTPase superfamily. EngB GTPase family. It depends on Mg(2+) as a cofactor.

Its function is as follows. Necessary for normal cell division and for the maintenance of normal septation. The protein is Probable GTP-binding protein EngB of Shewanella pealeana (strain ATCC 700345 / ANG-SQ1).